The following is a 79-amino-acid chain: Small ribosomal subunit protein uS17 (79 aa).

It belongs to the universal ribosomal protein uS17 family. Part of the 30S ribosomal subunit.

Functionally, one of the primary rRNA binding proteins, it binds specifically to the 5'-end of 16S ribosomal RNA. The polypeptide is Small ribosomal subunit protein uS17 (Orientia tsutsugamushi (strain Boryong) (Rickettsia tsutsugamushi)).